The primary structure comprises 98 residues: NADH-ubiquinone oxidoreductase chain 4L (98 aa).

Helical transmembrane passes span 1–21, 29–49, and 61–81; these read MSLT…GLLL, SLLC…MVIL, and IILL…LVMV.

This sequence belongs to the complex I subunit 4L family. In terms of assembly, core subunit of respiratory chain NADH dehydrogenase (Complex I) which is composed of 45 different subunits.

The protein resides in the mitochondrion inner membrane. The enzyme catalyses a ubiquinone + NADH + 5 H(+)(in) = a ubiquinol + NAD(+) + 4 H(+)(out). Functionally, core subunit of the mitochondrial membrane respiratory chain NADH dehydrogenase (Complex I) which catalyzes electron transfer from NADH through the respiratory chain, using ubiquinone as an electron acceptor. Part of the enzyme membrane arm which is embedded in the lipid bilayer and involved in proton translocation. The sequence is that of NADH-ubiquinone oxidoreductase chain 4L (MT-ND4L) from Platyrrhinus helleri (Heller's broad-nosed bat).